We begin with the raw amino-acid sequence, 1155 residues long: DNA-directed RNA polymerase subunit beta (1155 aa).

This sequence belongs to the RNA polymerase beta chain family. As to quaternary structure, the RNAP catalytic core consists of 2 alpha, 1 beta, 1 beta' and 1 omega subunit. When a sigma factor is associated with the core the holoenzyme is formed, which can initiate transcription.

The enzyme catalyses RNA(n) + a ribonucleoside 5'-triphosphate = RNA(n+1) + diphosphate. Its function is as follows. DNA-dependent RNA polymerase catalyzes the transcription of DNA into RNA using the four ribonucleoside triphosphates as substrates. In Borreliella burgdorferi (strain ZS7) (Borrelia burgdorferi), this protein is DNA-directed RNA polymerase subunit beta.